The primary structure comprises 61 residues: Small ribosomal subunit protein uS14 (61 aa).

Residues Cys-24, Cys-27, Cys-40, and Cys-43 each contribute to the Zn(2+) site.

Belongs to the universal ribosomal protein uS14 family. Zinc-binding uS14 subfamily. Part of the 30S ribosomal subunit. Contacts proteins S3 and S10. Zn(2+) serves as cofactor.

Binds 16S rRNA, required for the assembly of 30S particles and may also be responsible for determining the conformation of the 16S rRNA at the A site. This chain is Small ribosomal subunit protein uS14, found in Nitratiruptor sp. (strain SB155-2).